We begin with the raw amino-acid sequence, 228 residues long: A-type ATP synthase subunit D (228 aa).

Over residues K205–A214 the composition is skewed to basic and acidic residues. The interval K205–D228 is disordered.

The protein belongs to the V-ATPase D subunit family. Has multiple subunits with at least A(3), B(3), C, D, E, F, H, I and proteolipid K(x).

It is found in the cell membrane. In terms of biological role, component of the A-type ATP synthase that produces ATP from ADP in the presence of a proton gradient across the membrane. This chain is A-type ATP synthase subunit D, found in Halorubrum lacusprofundi (strain ATCC 49239 / DSM 5036 / JCM 8891 / ACAM 34).